The sequence spans 241 residues: Endodeoxyribonuclease NucC (241 aa).

Catalysis depends on residues D73, E104, and K106. Mg(2+)-binding residues include D73 and E104.

The protein belongs to the NucC endonuclease family. Self-oligomerizes. Forms homotrimers; in the presence of cAAA the trimers associate face-to-face to form homohexamers. The 2 cAAA-binding sites are on the exterior of the hexamer at the three-way junction, there are maximally 2 cyclic nucleotides per hexamer. It depends on Mg(2+) as a cofactor.

Activated by cAAA and to a lesser extent cAA; both cyclic nucleotides are products of its cognate CD-NTase. Cyclic nucleotide binding causes hexamerization. Its function is as follows. Effector DNase of a CBASS antivirus system. CBASS (cyclic oligonucleotide-based antiphage signaling system) provides immunity against bacteriophage. The CD-NTase protein synthesizes cyclic nucleotides in response to infection; these serve as specific second messenger signals. The signals activate a diverse range of effectors, leading to bacterial cell death and thus abortive phage infection. A type III-C(AAA) CBASS system. A cyclic nucleotide-activated dsDNase. In the presence of 3',3',3'-cyclic AMP-AMP-AMP (cAAA) and to a lesser extent cyclic-di-AMP (c-di-AMP), endonucleolytically degrades dsDNA. Binds one cAAA in a pocket on one surface of the trimer; cAAA binding promotes hexamerization which is probably necessary for nuclease activation. The nuclease digests dsDNA to about 50 bp lengths. DNA has been modeled to contact a pair of juxtaposed active sites (one from each layer of the hexamer), accounting for cleavage on both strands. In Pseudomonas aeruginosa, this protein is Endodeoxyribonuclease NucC.